The chain runs to 464 residues: Pup--protein ligase (464 aa).

Glu14 provides a ligand contact to Mg(2+). Arg58 is a binding site for ATP. Tyr60 is a binding site for Mg(2+). Asp62 functions as the Proton acceptor in the catalytic mechanism. Position 68 (Glu68) interacts with Mg(2+). 2 residues coordinate ATP: Thr71 and Trp430.

This sequence belongs to the Pup ligase/Pup deamidase family. Pup-conjugating enzyme subfamily.

It carries out the reaction ATP + [prokaryotic ubiquitin-like protein]-L-glutamate + [protein]-L-lysine = ADP + phosphate + N(6)-([prokaryotic ubiquitin-like protein]-gamma-L-glutamyl)-[protein]-L-lysine.. It functions in the pathway protein degradation; proteasomal Pup-dependent pathway. It participates in protein modification; protein pupylation. Catalyzes the covalent attachment of the prokaryotic ubiquitin-like protein modifier Pup to the proteasomal substrate proteins, thereby targeting them for proteasomal degradation. This tagging system is termed pupylation. The ligation reaction involves the side-chain carboxylate of the C-terminal glutamate of Pup and the side-chain amino group of a substrate lysine. The chain is Pup--protein ligase from Micrococcus luteus (strain ATCC 4698 / DSM 20030 / JCM 1464 / CCM 169 / CCUG 5858 / IAM 1056 / NBRC 3333 / NCIMB 9278 / NCTC 2665 / VKM Ac-2230) (Micrococcus lysodeikticus).